The following is a 201-amino-acid chain: Flavin prenyltransferase UbiX (201 aa).

FMN contacts are provided by residues 23 to 25, Ser49, 103 to 106, and Arg138; these read GAS and SIKT. Dimethylallyl phosphate contacts are provided by Tyr168 and Lys184.

The protein belongs to the UbiX/PAD1 family.

The enzyme catalyses dimethylallyl phosphate + FMNH2 = prenylated FMNH2 + phosphate. Its function is as follows. Flavin prenyltransferase that catalyzes the synthesis of the prenylated FMN cofactor (prenyl-FMN) for 4-hydroxy-3-polyprenylbenzoic acid decarboxylase UbiD. The prenyltransferase is metal-independent and links a dimethylallyl moiety from dimethylallyl monophosphate (DMAP) to the flavin N5 and C6 atoms of FMN. This chain is Flavin prenyltransferase UbiX, found in Saccharolobus solfataricus (strain ATCC 35092 / DSM 1617 / JCM 11322 / P2) (Sulfolobus solfataricus).